The following is a 126-amino-acid chain: Large ribosomal subunit protein bL17 (126 aa).

This sequence belongs to the bacterial ribosomal protein bL17 family. In terms of assembly, part of the 50S ribosomal subunit. Contacts protein L32.

The protein is Large ribosomal subunit protein bL17 of Coxiella burnetii (strain CbuK_Q154) (Coxiella burnetii (strain Q154)).